Reading from the N-terminus, the 352-residue chain is WAT1-related protein At1g11450 (352 aa).

10 helical membrane passes run 14–34 (WPPM…NALV), 46–66 (IIGA…AYFL), 83–103 (FISG…GLSY), 107–127 (TVAC…ALIL), 139–159 (AGMI…FLTF), 187–207 (WLLG…WILF), 219–239 (FSST…LSLY), 253–273 (FVIG…TVAA), 283–303 (VFAS…DFLI), and 308–328 (LYLG…VFLW). EamA domains are found at residues 27 to 157 (MGSV…ALFL) and 192 to 335 (LYLV…KETE).

This sequence belongs to the drug/metabolite transporter (DMT) superfamily. Plant drug/metabolite exporter (P-DME) (TC 2.A.7.4) family.

The protein resides in the membrane. This chain is WAT1-related protein At1g11450, found in Arabidopsis thaliana (Mouse-ear cress).